The following is a 347-amino-acid chain: Protein RecA (347 aa).

Residue 67 to 74 (GPESSGKT) participates in ATP binding.

Belongs to the RecA family.

It is found in the cytoplasm. Can catalyze the hydrolysis of ATP in the presence of single-stranded DNA, the ATP-dependent uptake of single-stranded DNA by duplex DNA, and the ATP-dependent hybridization of homologous single-stranded DNAs. It interacts with LexA causing its activation and leading to its autocatalytic cleavage. The chain is Protein RecA from Helicobacter pylori (strain Shi470).